We begin with the raw amino-acid sequence, 499 residues long: MELEKFKPWRDSHSEHIPVPLTSRQNIIIILLILFSHYHHWYWRCRRPTDRWSLLAVCHKHHQRAPNSLPTSKSLHSFLHSARGWNSWGIQATPNTIPSYPKEELGRVLNQKFIISQCTMLTDPATQDAGYDLCSLDGGWYSSITDKFGCITYNASLFDISALSRYLHGKGLRMGLYSQPGTPCKARHGTNVTVGSAFIDHVDKNNNCYFDYENPNTQLYRELITLWVSWGVDMIKLDYVTPGSTFQDTCMPGNLNASAIAYHCAIEKSGRKFQLDVSSDVCRSQPYWGTWNSNADSIRVDTDINPYDSDDFFFFYMQHCTVEDYRQFVNLQVVDAQNDKPVTLRGNLDNLFVGNPAKVKGVTDKQRNTLMRIWIGASSNLFLGSDMRILDDLGRWLITSPSSIAAADFCAMYPMQPRNPGTGSNQAVQLQACITGPSEHGEAYVLLTNLGPNLGDGGYVTVGGGEQKMSVTLADMGPSRSSANRLDLSPRPIHVLILL.

N-linked (GlcNAc...) asparagine glycosylation is found at asparagine 154 and asparagine 191. Aspartate 238 acts as the Nucleophile in catalysis. N-linked (GlcNAc...) asparagine glycosylation occurs at asparagine 256. The active-site Proton donor is aspartate 303.

The protein belongs to the glycosyl hydrolase 27 family.

Its subcellular location is the secreted. It catalyses the reaction Hydrolysis of terminal, non-reducing alpha-D-galactose residues in alpha-D-galactosides, including galactose oligosaccharides, galactomannans and galactolipids.. Functionally, putative alpha-galactosidase involved in the degradation of simple oligosaccharides like melibiose, raffinose and stachyose, and of polymeric galacto(gluco)mannans. The protein is Putative alpha-galactosidase 8 (agl8) of Emericella nidulans (strain FGSC A4 / ATCC 38163 / CBS 112.46 / NRRL 194 / M139) (Aspergillus nidulans).